Here is a 332-residue protein sequence, read N- to C-terminus: Peroxidase C1C (332 aa).

A signal peptide spans 1-9 (MLHASFSNA). Position 10 is a pyrrolidone carboxylic acid (glutamine 10). Disulfide bonds link cysteine 20–cysteine 100, cysteine 53–cysteine 58, cysteine 106–cysteine 310, and cysteine 186–cysteine 218. A glycan (N-linked (GlcNAc...) asparagine) is linked at asparagine 22. The active-site Proton acceptor is the histidine 51. Positions 52, 55, 57, 59, and 61 each coordinate Ca(2+). An N-linked (GlcNAc...) asparagine glycan is attached at asparagine 66. A substrate-binding site is contributed by proline 148. Histidine 179 contacts heme b. A Ca(2+)-binding site is contributed by threonine 180. Asparagine 195, asparagine 207, and asparagine 223 each carry an N-linked (GlcNAc...) asparagine glycan. Ca(2+) contacts are provided by aspartate 231, threonine 234, and aspartate 239. Asparagine 264 is a glycosylation site (N-linked (GlcNAc...) asparagine).

The protein belongs to the peroxidase family. Classical plant (class III) peroxidase subfamily. Ca(2+) serves as cofactor. The cofactor is heme b.

The protein resides in the secreted. Its subcellular location is the vacuole. The enzyme catalyses 2 a phenolic donor + H2O2 = 2 a phenolic radical donor + 2 H2O. Removal of H(2)O(2), oxidation of toxic reductants, biosynthesis and degradation of lignin, suberization, auxin catabolism, response to environmental stresses such as wounding, pathogen attack and oxidative stress. These functions might be dependent on each isozyme/isoform in each plant tissue. This is Peroxidase C1C (PRXC1C) from Armoracia rusticana (Horseradish).